The sequence spans 93 residues: Large ribosomal subunit protein uL23cz/uL23cy (93 aa).

The protein belongs to the universal ribosomal protein uL23 family. As to quaternary structure, part of the 50S ribosomal subunit.

The protein localises to the plastid. Its subcellular location is the chloroplast. In terms of biological role, binds to 23S rRNA. This chain is Large ribosomal subunit protein uL23cz/uL23cy (rpl23-A), found in Nandina domestica (Heavenly bamboo).